Here is a 105-residue protein sequence, read N- to C-terminus: Small ribosomal subunit protein uS10 (105 aa).

It belongs to the universal ribosomal protein uS10 family. Part of the 30S ribosomal subunit.

Its function is as follows. Involved in the binding of tRNA to the ribosomes. This is Small ribosomal subunit protein uS10 from Lachnoclostridium phytofermentans (strain ATCC 700394 / DSM 18823 / ISDg) (Clostridium phytofermentans).